The following is an 877-amino-acid chain: Alanine--tRNA ligase (877 aa).

Residues His-556, His-560, Cys-657, and His-661 each coordinate Zn(2+).

It belongs to the class-II aminoacyl-tRNA synthetase family. Zn(2+) serves as cofactor.

The protein resides in the cytoplasm. The catalysed reaction is tRNA(Ala) + L-alanine + ATP = L-alanyl-tRNA(Ala) + AMP + diphosphate. Its function is as follows. Catalyzes the attachment of alanine to tRNA(Ala) in a two-step reaction: alanine is first activated by ATP to form Ala-AMP and then transferred to the acceptor end of tRNA(Ala). Also edits incorrectly charged Ser-tRNA(Ala) and Gly-tRNA(Ala) via its editing domain. The chain is Alanine--tRNA ligase from Wolbachia pipientis wMel.